Consider the following 70-residue polypeptide: U-actitoxin-Ael2c (70 aa).

An N-terminal signal peptide occupies residues 1 to 21 (SYQRFLFLVVVASLIATSLAI). Positions 22-26 (PKDLE) are excised as a propeptide. Disulfide bonds link Cys-32–Cys-65, Cys-34–Cys-58, and Cys-48–Cys-66.

The protein belongs to the sea anemone type 3 (BDS) potassium channel toxin family.

The protein localises to the secreted. The protein resides in the nematocyst. In terms of biological role, potently and selectively inhibits voltage-gated potassium channels Kv11/KCNH/ERG. Acts as a gating-modifier toxin that shifts the voltage-dependence of ERG activation in the positive direction and suppresses its current amplitudes elicited by strong depolarizing pulses that maximally activate the channels. The protein is U-actitoxin-Ael2c of Anthopleura elegantissima (Green aggregating anemone).